A 396-amino-acid polypeptide reads, in one-letter code: Gap junction gamma-1 protein (396 aa).

Residues 1–22 (MSWSFLTRLLEEIHNHSTFVGK) lie on the Cytoplasmic side of the membrane. Residues 23-45 (IWLTVLIAFRIALTAVGGESIYY) form a helical membrane-spanning segment. Over 46–75 (DEQSKFVCNTEQPGCENVCYDAFAPLSHVR) the chain is Extracellular. A helical membrane pass occupies residues 76–95 (FWVFQIILVATPSVMYLGYA). Residues 96–175 (IHKIAKMEHG…RRIREDGLMK (80 aa)) are Cytoplasmic-facing. A disordered region spans residues 145–165 (ELESEKENKEQNQPKPKHDGR). Residues 147–156 (ESEKENKEQN) show a composition bias toward basic and acidic residues. Residues 176-198 (IYVLQLLARTVFEVGFLIGQYFL) traverse the membrane as a helical segment. Residues 199–228 (YGFQVHPFYVCSRLPCPHKIDCFISRPTEK) are Extracellular-facing. Residues 229–248 (TIFLLIMYGVTGLCLLLNIW) traverse the membrane as a helical segment. At 249 to 396 (EMLHLGFGTI…SGDGKNSVWI (148 aa)) the chain is on the cytoplasmic side. The interval 355-396 (AYSHQNNPHGPREKKAKVGSKAGSNKSSASSKSGDGKNSVWI) is disordered. The span at 373-396 (GSKAGSNKSSASSKSGDGKNSVWI) shows a compositional bias: low complexity.

The protein belongs to the connexin family. Gamma-type subfamily. As to quaternary structure, a connexon is composed of a hexamer of connexins. Interacts with CNST.

It localises to the cell membrane. The protein resides in the cell junction. It is found in the gap junction. In terms of biological role, one gap junction consists of a cluster of closely packed pairs of transmembrane channels, the connexons, through which materials of low MW diffuse from one cell to a neighboring cell. The protein is Gap junction gamma-1 protein (GJC1) of Canis lupus familiaris (Dog).